Reading from the N-terminus, the 255-residue chain is Imidazole glycerol phosphate synthase subunit HisF (255 aa).

Catalysis depends on residues D11 and D130.

The protein belongs to the HisA/HisF family. In terms of assembly, heterodimer of HisH and HisF.

The protein localises to the cytoplasm. The catalysed reaction is 5-[(5-phospho-1-deoxy-D-ribulos-1-ylimino)methylamino]-1-(5-phospho-beta-D-ribosyl)imidazole-4-carboxamide + L-glutamine = D-erythro-1-(imidazol-4-yl)glycerol 3-phosphate + 5-amino-1-(5-phospho-beta-D-ribosyl)imidazole-4-carboxamide + L-glutamate + H(+). The protein operates within amino-acid biosynthesis; L-histidine biosynthesis; L-histidine from 5-phospho-alpha-D-ribose 1-diphosphate: step 5/9. Functionally, IGPS catalyzes the conversion of PRFAR and glutamine to IGP, AICAR and glutamate. The HisF subunit catalyzes the cyclization activity that produces IGP and AICAR from PRFAR using the ammonia provided by the HisH subunit. The chain is Imidazole glycerol phosphate synthase subunit HisF from Rhodopseudomonas palustris (strain ATCC BAA-98 / CGA009).